Consider the following 153-residue polypeptide: Ubiquitin-conjugating enzyme E2 36 (153 aa).

In terms of domain architecture, UBC core spans 5–151 (NLPRRIIKET…AKEWTRLYAS (147 aa)). C89 acts as the Glycyl thioester intermediate in catalysis.

This sequence belongs to the ubiquitin-conjugating enzyme family. In terms of assembly, interacts with yeast and human Mms2, with the RING domain of RGLG2 and with UEV1A, UEV1B, UEV1C and UEV1D. In terms of tissue distribution, ubiquitously expressed at low level.

The catalysed reaction is S-ubiquitinyl-[E1 ubiquitin-activating enzyme]-L-cysteine + [E2 ubiquitin-conjugating enzyme]-L-cysteine = [E1 ubiquitin-activating enzyme]-L-cysteine + S-ubiquitinyl-[E2 ubiquitin-conjugating enzyme]-L-cysteine.. It functions in the pathway protein modification; protein ubiquitination. Functionally, catalyzes the synthesis of non-canonical poly-ubiquitin chains that are linked through 'Lys-63'. This type of poly-ubiquitination does not lead to protein degradation by the proteasome. Mediates transcriptional activation of target genes. Required for postreplication repair of UV-damaged DNA and for adapting root developmental programs to suboptimal availability of iron. The protein is Ubiquitin-conjugating enzyme E2 36 (UBC36) of Arabidopsis thaliana (Mouse-ear cress).